A 403-amino-acid polypeptide reads, in one-letter code: 3-(3-hydroxy-phenyl)propionate transporter (403 aa).

Residues 1-16 (MSTRTPSSSSSRLMLT) lie on the Cytoplasmic side of the membrane. Residues 17–37 (IGLCFLVALMEGLDLQAAGIA) traverse the membrane as a helical segment. Over 38-53 (AGGIAQAFALDKMQMG) the chain is Periplasmic. The chain crosses the membrane as a helical span at residues 54–74 (WIFSAGILGLLPGALVGGMLA). Topologically, residues 75–81 (DRYGRKR) are cytoplasmic. A helical membrane pass occupies residues 82–102 (ILIGSVALFGLFSLATAIAWD). The Periplasmic segment spans residues 103 to 105 (FPS). Residues 106–126 (LVFARLMTGVGLGAALPNLIA) form a helical membrane-spanning segment. Residues 127–142 (LTSEAAGPRFRGTAVS) are Cytoplasmic-facing. Residues 143–163 (LMYCGVPIGAALAATLGFAGA) form a helical membrane-spanning segment. Position 164 (Asn-164) is a topological domain, periplasmic. The helical transmembrane segment at 165-185 (LAWQTVFWVGGVVPLILVPLL) threads the bilayer. Residues 186-217 (MRWLPESAVFAGEKQSAPPLRALFAPETATAT) are Cytoplasmic-facing. A helical transmembrane segment spans residues 218–238 (LLLWLCYFFTLLVVYMLINWL). Residues 239 to 253 (PLLLVEQGFQPSQAA) are Periplasmic-facing. Residues 254–274 (GVMFALQMGAASGTLMLGALM) traverse the membrane as a helical segment. Over 275-279 (DKLRP) the chain is Cytoplasmic. The chain crosses the membrane as a helical span at residues 280–300 (VTMSLLIYSGMLASLLALGTV). At 301–306 (SSFNGM) the chain is on the periplasmic side. A helical transmembrane segment spans residues 307-327 (LLAGFVAGLFATGGQSVLYAL). The Cytoplasmic segment spans residues 328–339 (APLFYSSQIRAT). Residues 340–360 (GVGTAVAVGRLGAMSGPLLAG) traverse the membrane as a helical segment. Residues 361-369 (KMLALGTGT) are Periplasmic-facing. The helical transmembrane segment at 370 to 390 (VGVMAASAPGILVAGLAVFIL) threads the bilayer. Residues 391–403 (MSRRSRIQPCADA) are Cytoplasmic-facing.

It belongs to the major facilitator superfamily. Aromatic acid:H(+) symporter (AAHS) (TC 2.A.1.15) family.

The protein localises to the cell inner membrane. It carries out the reaction 3-(3-hydroxyphenyl)propanoate(in) + H(+)(in) = 3-(3-hydroxyphenyl)propanoate(out) + H(+)(out). Inhibited by carbonyl cyanide m-chlorophenylhydrazone (CCCP), which dissipates the proton motive force. Uptake of 3-(3-hydroxyphenyl)propionate (3HPP) across the cytoplasmic membrane. Transport is driven by the proton motive force. Does not transport benzoate, 3-hydroxybenzoate or gentisate. This is 3-(3-hydroxy-phenyl)propionate transporter from Escherichia coli (strain K12).